We begin with the raw amino-acid sequence, 458 residues long: MVANWVLALTRQFDPFMFMMVMGVGISSNILYSFPYPARWLRICSYIMFAIACLIFIAVQALQILHLIVYIKEKSFREYFNDFFRNMKHNLFWGTYPMGLVTIINFLGALSKANTTKSPTNARNLMIFVYVLWWYDLAVCLVIAWGISFLIWHDYYPLEGIGNYPSYNIKMASENMKSVLLLDIIPLVVVASSCGTFTMSEIFFHAFNRNIQLITLVICALTWLHAIIFVFILIAIYFWSLYINKIPPMTQVFTLFLLLGPMGQGSFGVLLLTDNIKKYAGKYYPTDNITREQEILTIAVPWCFKILGMVSAMALLAMGYFFTVISVVSILSYYNKKEIENETGKVKRVYTFHKGFWGMTFPMGTMSLGNEELYVQYNQYVPLYAFRVLGTIYGGVCVCWSILCLLCTLHEYSKKMLHAARKSSLFSESGTEKTTVSPYNSIESVEESNSALDFTRLA.

The Cytoplasmic segment spans residues 1 to 11 (MVANWVLALTR). Residues 12-32 (QFDPFMFMMVMGVGISSNILY) form a helical membrane-spanning segment. Residues 33 to 48 (SFPYPARWLRICSYIM) are Extracellular-facing. Residues 49 to 69 (FAIACLIFIAVQALQILHLIV) traverse the membrane as a helical segment. The Cytoplasmic portion of the chain corresponds to 70 to 89 (YIKEKSFREYFNDFFRNMKH). The chain crosses the membrane as a helical span at residues 90-110 (NLFWGTYPMGLVTIINFLGAL). Over 111–135 (SKANTTKSPTNARNLMIFVYVLWWY) the chain is Extracellular. Residues 136–156 (DLAVCLVIAWGISFLIWHDYY) form a helical membrane-spanning segment. Residues 157–176 (PLEGIGNYPSYNIKMASENM) lie on the Cytoplasmic side of the membrane. A helical transmembrane segment spans residues 177–197 (KSVLLLDIIPLVVVASSCGTF). Residues 198–220 (TMSEIFFHAFNRNIQLITLVICA) are Extracellular-facing. A helical membrane pass occupies residues 221–241 (LTWLHAIIFVFILIAIYFWSL). Residues 242–252 (YINKIPPMTQV) are Cytoplasmic-facing. A helical membrane pass occupies residues 253-275 (FTLFLLLGPMGQGSFGVLLLTDN). The Extracellular segment spans residues 276–309 (IKKYAGKYYPTDNITREQEILTIAVPWCFKILGM). The chain crosses the membrane as a helical span at residues 310-330 (VSAMALLAMGYFFTVISVVSI). Topologically, residues 331 to 350 (LSYYNKKEIENETGKVKRVY) are cytoplasmic. A helical membrane pass occupies residues 351 to 371 (TFHKGFWGMTFPMGTMSLGNE). Topologically, residues 372–387 (ELYVQYNQYVPLYAFR) are extracellular. A helical transmembrane segment spans residues 388 to 408 (VLGTIYGGVCVCWSILCLLCT). The Cytoplasmic segment spans residues 409–458 (LHEYSKKMLHAARKSSLFSESGTEKTTVSPYNSIESVEESNSALDFTRLA). Phosphoserine is present on residues S444, S448, and S450.

The protein belongs to the tellurite-resistance/dicarboxylate transporter (TDT) family.

The protein resides in the cell membrane. Its function is as follows. Involved in efflux of free sulfite. Mutations in the SSU1 gene cause sensitivity to sulfite. This Saccharomyces cerevisiae (strain ATCC 204508 / S288c) (Baker's yeast) protein is Sulfite efflux pump SSU1 (SSU1).